Consider the following 155-residue polypeptide: Ribosomal RNA large subunit methyltransferase H (155 aa).

Residues leucine 72, glycine 103, and 122-127 (LSALTL) each bind S-adenosyl-L-methionine.

Belongs to the RNA methyltransferase RlmH family. Homodimer.

It is found in the cytoplasm. It carries out the reaction pseudouridine(1915) in 23S rRNA + S-adenosyl-L-methionine = N(3)-methylpseudouridine(1915) in 23S rRNA + S-adenosyl-L-homocysteine + H(+). Its function is as follows. Specifically methylates the pseudouridine at position 1915 (m3Psi1915) in 23S rRNA. In Salmonella dublin (strain CT_02021853), this protein is Ribosomal RNA large subunit methyltransferase H.